The following is a 247-amino-acid chain: 23S rRNA (guanosine-2'-O-)-methyltransferase RlmB (247 aa).

The S-adenosyl-L-methionine site is built by Gly197, Ile217, and Leu226.

Belongs to the class IV-like SAM-binding methyltransferase superfamily. RNA methyltransferase TrmH family. RlmB subfamily.

It localises to the cytoplasm. It catalyses the reaction guanosine(2251) in 23S rRNA + S-adenosyl-L-methionine = 2'-O-methylguanosine(2251) in 23S rRNA + S-adenosyl-L-homocysteine + H(+). Specifically methylates the ribose of guanosine 2251 in 23S rRNA. The polypeptide is 23S rRNA (guanosine-2'-O-)-methyltransferase RlmB (Burkholderia sp).